Here is a 656-residue protein sequence, read N- to C-terminus: Period circadian protein (656 aa).

Low complexity predominate over residues 1–34; it reads KVSDSAYSNSCSNSQSQRSGSSKSRLSGSHSSGS. The segment at 1–161 is disordered; it reads KVSDSAYSNS…AAQSFPIPSP (161 aa). The short motif at 53-66 is the Nuclear localization signal element; that stretch reads KRNKDKSRKKKKNK. Basic residues predominate over residues 53–66; the sequence is KRNKDKSRKKKKNK. Positions 108 to 120 are enriched in basic and acidic residues; the sequence is ELQDQQHGEDHSE. PAS domains are found at residues 224-359 and 377-483; these read DSFC…ATPI and FAIR…RVFQ. The interval 580–656 is disordered; sequence TSIAGTGGTG…SSRGGSTAIP (77 aa). 26 tandem repeats follow at residues 584–585, 587–588, 589–590, 591–592, 593–594, 595–596, 597–598, 599–600, 601–602, 603–604, 605–606, 607–608, 609–610, 611–612, 613–614, 615–616, 617–618, 619–620, 621–622, 623–624, 625–626, 627–628, 629–630, 631–632, 633–634, and 635–636. Residues 584-642 show a composition bias toward gly residues; it reads GTGGTGTGTGTGTGTGTGTGTGTGTGTGTGTGTGTGTGTGTGTGTGTGTGNGTNSGTGT. Residues 584–644 form a 30 X 2 AA approximate tandem repeats of G-[TN] region; it reads GTGGTGTGTG…GTNSGTGTGT (61 aa). Residues 637 to 638 form a 27; approximate repeat; sequence NS. 3 repeat units span residues 639-640, 641-642, and 643-644. The segment covering 643 to 656 has biased composition (low complexity); the sequence is GTTSSSRGGSTAIP.

In terms of assembly, forms a heterodimer with timeless (TIM); the complex then translocates into the nucleus. Post-translationally, phosphorylated with a circadian rhythmicity, probably by the double-time protein (dbt). Phosphorylation could be implicated in the stability of per monomer and in the formation of heterodimer per-tim.

The protein localises to the nucleus. The protein resides in the cytoplasm. It localises to the perinuclear region. In terms of biological role, essential for biological clock functions. Determines the period length of circadian and ultradian rhythms; an increase in PER dosage leads to shortened circadian rhythms and a decrease leads to lengthened circadian rhythms. Essential for the circadian rhythmicity of locomotor activity, eclosion behavior, and for the rhythmic component of the male courtship song that originates in the thoracic nervous system. The biological cycle depends on the rhythmic formation and nuclear localization of the TIM-PER complex. Light induces the degradation of TIM, which promotes elimination of PER. Nuclear activity of the heterodimer coordinatively regulates PER and TIM transcription through a negative feedback loop. Behaves as a negative element in circadian transcriptional loop. Does not appear to bind DNA, suggesting indirect transcriptional inhibition. The polypeptide is Period circadian protein (per) (Drosophila simulans (Fruit fly)).